Consider the following 399-residue polypeptide: Centrosomal protein 43 (399 aa).

The 33-residue stretch at 70–102 (DGRLVASLVAEFLQFFNLDFTLAVFQPETSTLQ) folds into the LisH domain. Disordered stretches follow at residues 139–218 (EKGP…SSLH) and 232–308 (NRTL…SESK). A Phosphothreonine modification is found at threonine 143. 3 positions are modified to phosphoserine: serine 152, serine 156, and serine 160. Residues 163 to 172 (GKTSAQTTPS) show a composition bias toward polar residues. Phosphothreonine is present on threonine 170. The span at 175–186 (PRYKGQGKKKTS) shows a compositional bias: basic residues. The residue at position 202 (serine 202) is a Phosphoserine. Residues 205–218 (SVSLSEPKSKSSLH) show a composition bias toward low complexity. Threonine 234 is subject to Phosphothreonine. Residues 245–256 (PDEDDMEGDSFF) are compositionally biased toward acidic residues. Basic and acidic residues predominate over residues 259–275 (PIPKPEKTYGLRKEPRK). Over residues 286–302 (APPLKSGLSSLAGAPSL) the composition is skewed to low complexity. A phosphoserine mark is found at serine 301 and serine 326. The tract at residues 331–353 (TGEDDDYVDDFNSTSHRSEKSEI) is disordered. Tyrosine 337 carries the phosphotyrosine modification.

This sequence belongs to the CEP43 family. Homodimer. Part of a ternary complex that contains CEP350, CEP43 and MAPRE1. Interacts directly with CEP350 and MAPRE1. Interacts with CEP19. Interacts (via N-terminus) with CEP350 (via C-terminus). Ubiquitous. Highly expressed in heart, liver, muscle, kidney, intestine, colon, adrenal gland, prostate, testis, and pancreas.

The protein localises to the cytoplasm. It is found in the cytoskeleton. Its subcellular location is the microtubule organizing center. It localises to the centrosome. The protein resides in the centriole. The protein localises to the cilium basal body. Required for anchoring microtubules to the centrosomes. Required for ciliation. This chain is Centrosomal protein 43, found in Homo sapiens (Human).